The following is an 859-amino-acid chain: DNA mismatch repair protein MutS (859 aa).

Position 618–625 (618–625 (GPNMGGKS)) interacts with ATP.

It belongs to the DNA mismatch repair MutS family.

In terms of biological role, this protein is involved in the repair of mismatches in DNA. It is possible that it carries out the mismatch recognition step. This protein has a weak ATPase activity. This Shewanella sediminis (strain HAW-EB3) protein is DNA mismatch repair protein MutS.